The following is a 164-amino-acid chain: MTEFTHINQQGHAKMVDVSDKQITKRTAVAHSSITVNETIFKQISNNTNTKGNVLNTAQIAGIMAAKNTSTIIPMCHPLPLTGIDVHFSWDETNAPLYTLNIQTTVSTTGKTGVEMEALTAASATALTIYDMTKAVDKGMIIGETYLESKSGGKSGDFQRQSGQ.

Residues 75–77 (MCH) and 116–117 (ME) each bind substrate. Asp131 is an active-site residue.

Belongs to the MoaC family. Homohexamer; trimer of dimers.

It carries out the reaction (8S)-3',8-cyclo-7,8-dihydroguanosine 5'-triphosphate = cyclic pyranopterin phosphate + diphosphate. It participates in cofactor biosynthesis; molybdopterin biosynthesis. Its function is as follows. Catalyzes the conversion of (8S)-3',8-cyclo-7,8-dihydroguanosine 5'-triphosphate to cyclic pyranopterin monophosphate (cPMP). The protein is Cyclic pyranopterin monophosphate synthase of Staphylococcus aureus (strain Mu3 / ATCC 700698).